We begin with the raw amino-acid sequence, 74 residues long: uncharacterized protein (74 aa).

This is an uncharacterized protein from Enterobacteria phage T4 (Bacteriophage T4).